The following is a 210-amino-acid chain: Ribonuclease HII (210 aa).

An RNase H type-2 domain is found at 18 to 210; sequence GLIAGVDEVG…FKPVKALLGL (193 aa). The a divalent metal cation site is built by Asp24, Glu25, and Asp116.

Belongs to the RNase HII family. The cofactor is Mn(2+). Requires Mg(2+) as cofactor.

The protein localises to the cytoplasm. It catalyses the reaction Endonucleolytic cleavage to 5'-phosphomonoester.. Functionally, endonuclease that specifically degrades the RNA of RNA-DNA hybrids. This chain is Ribonuclease HII, found in Shewanella baltica (strain OS223).